The sequence spans 168 residues: Group 2 truncated hemoglobin 3-1 (168 aa).

Histidine 98 contributes to the heme b binding site.

The protein belongs to the truncated hemoglobin family. Group II subfamily. Homodimer when ferric. In terms of tissue distribution, mainly expressed in root nodules, but barely in leaves, roots, stems, flowers and fruits.

In terms of biological role, hemoglobin-like protein that exhibits an unusual concentration-independent binding of O(2) and CO. Required for general plant development and during nodulation. May promote shoot organogenesis from root explants. The sequence is that of Group 2 truncated hemoglobin 3-1 from Lotus japonicus (Lotus corniculatus var. japonicus).